Here is a 470-residue protein sequence, read N- to C-terminus: Zinc finger protein weckle (470 aa).

Residues 1-103 are required for homodimerization; sequence MGVPTSDWIY…DALRLEYGLP (103 aa). The ZAD domain occupies 10–82; sequence YWCRLCARDD…SKVQAIFELL (73 aa). Zn(2+) is bound by residues Cys12, Cys15, Cys55, and Cys58. The disordered stretch occupies residues 156–265; it reads NSDPKVLASP…LSMSPHGSQS (110 aa). Ser168 bears the Phosphoserine mark. Over residues 195–208 the composition is skewed to acidic residues; sequence ESDDEEAILDEDEA. Positions 214–225 are enriched in basic residues; the sequence is LKRKRGRPKGSG. A compositionally biased stretch (basic and acidic residues) spans 237–254; sequence TSREPDDNAKSKQDDKTS. Positions 255–265 are enriched in polar residues; that stretch reads ELSMSPHGSQS. 6 C2H2-type zinc fingers span residues 271-294, 300-322, 328-350, 355-377, 383-405, and 411-434; these read YPCK…HDMH, YVCD…QLVH, CICP…SQTH, FECN…KYVH, FKCE…LLGH, and YVCK…WKKH.

Homodimer. Interacts with Myd88 and Toll.

The protein resides in the cell membrane. Its function is as follows. Acts as an adapter to assemble/stabilize a Toll/wek/Myd88/tube complex; required for efficient recruitment of Myd88 to Toll. Dispensable for innate immune response; plays a minimal role, if any, in the immune defense against Gram-positive bacteria and fungi. Involved in dorsoventral axis determination. The chain is Zinc finger protein weckle from Drosophila melanogaster (Fruit fly).